Consider the following 475-residue polypeptide: MATASQGKVTQVIGAVVDVQFDGGLPAILNALETVNNDKRLVLEVAQHLGENTVRTIAMDATEGLVRGAPVTDLGGPISVPVGDATLGRILNVIGEPIDEKGPVSGDSTRAIHQPAPTFAEQSTTSEILVTGIKVIDLLAPYSKGGKIGLFGGAGVGKTVLIMELINNIAKVHSGYSVFAGVGERTREGNDLYHEMIDSGVIKIDNLSESKVALVYGQMNEPPGARARVALTGLTLAEQFRDQSGTDVLFFVDNIFRFTQAGSEVSALLGRIPSAVGYQPTLATDMGALQERITSTKAGSITSVQAIYVPADDLTDPAPATSFAHLDATTVLSRAISELGIYPAVDPLDSTSRILDPQIVGEEHYNVARAVQGILQRYKSLQDIIAILGMDELSEEDKLTVARARKIQRFLSQPFDVAKVFTGSDGVQVPLEKTIASFKAVVNGEYDHLPEAAFYMVGDIEDVIAKAQRLAAQAA.

Residue 152 to 159 participates in ATP binding; that stretch reads GGAGVGKT.

It belongs to the ATPase alpha/beta chains family. In terms of assembly, F-type ATPases have 2 components, CF(1) - the catalytic core - and CF(0) - the membrane proton channel. CF(1) has five subunits: alpha(3), beta(3), gamma(1), delta(1), epsilon(1). CF(0) has four main subunits: a(1), b(1), b'(1) and c(9-12).

It is found in the cell inner membrane. The catalysed reaction is ATP + H2O + 4 H(+)(in) = ADP + phosphate + 5 H(+)(out). In terms of biological role, produces ATP from ADP in the presence of a proton gradient across the membrane. The catalytic sites are hosted primarily by the beta subunits. This Cereibacter sphaeroides (strain ATCC 17025 / ATH 2.4.3) (Rhodobacter sphaeroides) protein is ATP synthase subunit beta.